A 362-amino-acid polypeptide reads, in one-letter code: Peptide chain release factor 1 (362 aa).

An N5-methylglutamine modification is found at Q240.

This sequence belongs to the prokaryotic/mitochondrial release factor family. Post-translationally, methylated by PrmC. Methylation increases the termination efficiency of RF1.

It localises to the cytoplasm. In terms of biological role, peptide chain release factor 1 directs the termination of translation in response to the peptide chain termination codons UAG and UAA. The polypeptide is Peptide chain release factor 1 (Bifidobacterium longum subsp. infantis (strain ATCC 15697 / DSM 20088 / JCM 1222 / NCTC 11817 / S12)).